The chain runs to 287 residues: MDKIKIALQYIMPKHLLSRLVGKLAAAQMGSVTTAAINWFIKQYKIDMSEAAQSEATAYASFNDFFTRALKPGIRPLCEDNDYIVHPVDGAVSQLGPIKEGRIFQAKGHDYSSLALLGDQADDAKRFEGGDFATIYLAPKDYHRIHMPIKGTLSKMTYVPGELFSVNPLTAENVPGLFARNERVVAIFETEIGPMAMVLVGATIVASIETVWAGTVTPPTGKKVFTWDYPTEGPNALTLEKGAEMGRFKLGSTVVMLFAKDALDKFADGVEPKSVTRMGQAFAKIED.

Catalysis depends on charge relay system; for autoendoproteolytic cleavage activity residues D89, H146, and S252. Catalysis depends on S252, which acts as the Schiff-base intermediate with substrate; via pyruvic acid; for decarboxylase activity. S252 is subject to Pyruvic acid (Ser); by autocatalysis.

This sequence belongs to the phosphatidylserine decarboxylase family. PSD-B subfamily. Prokaryotic type I sub-subfamily. Heterodimer of a large membrane-associated beta subunit and a small pyruvoyl-containing alpha subunit. Requires pyruvate as cofactor. Is synthesized initially as an inactive proenzyme. Formation of the active enzyme involves a self-maturation process in which the active site pyruvoyl group is generated from an internal serine residue via an autocatalytic post-translational modification. Two non-identical subunits are generated from the proenzyme in this reaction, and the pyruvate is formed at the N-terminus of the alpha chain, which is derived from the carboxyl end of the proenzyme. The autoendoproteolytic cleavage occurs by a canonical serine protease mechanism, in which the side chain hydroxyl group of the serine supplies its oxygen atom to form the C-terminus of the beta chain, while the remainder of the serine residue undergoes an oxidative deamination to produce ammonia and the pyruvoyl prosthetic group on the alpha chain. During this reaction, the Ser that is part of the protease active site of the proenzyme becomes the pyruvoyl prosthetic group, which constitutes an essential element of the active site of the mature decarboxylase.

The protein localises to the cell membrane. It catalyses the reaction a 1,2-diacyl-sn-glycero-3-phospho-L-serine + H(+) = a 1,2-diacyl-sn-glycero-3-phosphoethanolamine + CO2. It functions in the pathway phospholipid metabolism; phosphatidylethanolamine biosynthesis; phosphatidylethanolamine from CDP-diacylglycerol: step 2/2. In terms of biological role, catalyzes the formation of phosphatidylethanolamine (PtdEtn) from phosphatidylserine (PtdSer). The protein is Phosphatidylserine decarboxylase proenzyme of Shewanella pealeana (strain ATCC 700345 / ANG-SQ1).